The primary structure comprises 1690 residues: DNA-directed RNA polymerase subunit beta' (1690 aa).

Zn(2+) contacts are provided by cysteine 63, cysteine 65, cysteine 78, and cysteine 81. Residues aspartate 753, aspartate 755, and aspartate 757 each contribute to the Mg(2+) site. Zn(2+) is bound by residues cysteine 1107, cysteine 1295, cysteine 1302, and cysteine 1305.

The protein belongs to the RNA polymerase beta' chain family. As to quaternary structure, the RNAP catalytic core consists of 2 alpha, 1 beta, 1 beta' and 1 omega subunit. When a sigma factor is associated with the core the holoenzyme is formed, which can initiate transcription. Mg(2+) serves as cofactor. It depends on Zn(2+) as a cofactor.

It carries out the reaction RNA(n) + a ribonucleoside 5'-triphosphate = RNA(n+1) + diphosphate. Its function is as follows. DNA-dependent RNA polymerase catalyzes the transcription of DNA into RNA using the four ribonucleoside triphosphates as substrates. This Thermotoga neapolitana (strain ATCC 49049 / DSM 4359 / NBRC 107923 / NS-E) protein is DNA-directed RNA polymerase subunit beta'.